An 82-amino-acid polypeptide reads, in one-letter code: ATP synthase subunit c, chloroplastic (82 aa).

Transmembrane regions (helical) follow at residues 4–24 (IISA…AIGP) and 57–77 (LAFM…LLFA).

Belongs to the ATPase C chain family. In terms of assembly, F-type ATPases have 2 components, F(1) - the catalytic core - and F(0) - the membrane proton channel. F(1) has five subunits: alpha(3), beta(3), gamma(1), delta(1), epsilon(1). F(0) has four main subunits: a(1), b(1), b'(1) and c(10-14). The alpha and beta chains form an alternating ring which encloses part of the gamma chain. F(1) is attached to F(0) by a central stalk formed by the gamma and epsilon chains, while a peripheral stalk is formed by the delta, b and b' chains.

The protein localises to the plastid. It localises to the chloroplast thylakoid membrane. In terms of biological role, f(1)F(0) ATP synthase produces ATP from ADP in the presence of a proton or sodium gradient. F-type ATPases consist of two structural domains, F(1) containing the extramembraneous catalytic core and F(0) containing the membrane proton channel, linked together by a central stalk and a peripheral stalk. During catalysis, ATP synthesis in the catalytic domain of F(1) is coupled via a rotary mechanism of the central stalk subunits to proton translocation. Its function is as follows. Key component of the F(0) channel; it plays a direct role in translocation across the membrane. A homomeric c-ring of between 10-14 subunits forms the central stalk rotor element with the F(1) delta and epsilon subunits. This is ATP synthase subunit c, chloroplastic from Thalassiosira pseudonana (Marine diatom).